A 300-amino-acid chain; its full sequence is Jacalin-related lectin 33 (300 aa).

The interval 1 to 20 (MAQKVEAGGGAGGASWDDGV) is disordered. Residue Ala-2 is modified to N-acetylalanine. Jacalin-type lectin domains follow at residues 2–146 (AQKV…YFAT) and 154–297 (AKKL…HVMP).

The protein belongs to the jacalin lectin family. Component of the PYK10 complex, at least composed of PYK10/BGLU23, BGLU21, BGLU22, JAL22, JAL23, PBP1/JAL30, PBP2/JAL31, JAL32, JAL33, JAL34, JAL35, GLL22 and GLL23.

Its function is as follows. Sugar-binding protein showing significant affinity for (Glc alpha(1-4)Glc)(3) maltohexaose, (Glc alpha(1-6)Glc)(3) isomaltohexaose, Gal alpha(1-4)Gal beta(1-4)Glc, GalNAc alpha(1-3)(Fuc alpha(1-2)) and Gal beta(1-3)(Fuc alpha(1-4))GlcNAc beta(1-3)Gal beta(1-4)Glc. This is Jacalin-related lectin 33 (JAL33) from Arabidopsis thaliana (Mouse-ear cress).